Here is a 692-residue protein sequence, read N- to C-terminus: Glycine--tRNA ligase beta subunit (692 aa).

It belongs to the class-II aminoacyl-tRNA synthetase family. Tetramer of two alpha and two beta subunits.

It is found in the cytoplasm. The enzyme catalyses tRNA(Gly) + glycine + ATP = glycyl-tRNA(Gly) + AMP + diphosphate. In Pseudoalteromonas atlantica (strain T6c / ATCC BAA-1087), this protein is Glycine--tRNA ligase beta subunit.